Reading from the N-terminus, the 496-residue chain is 1-aminocyclopropane-1-carboxylate synthase 2 (496 aa).

Residues Glu55 and Tyr93 each contribute to the substrate site. The residue at position 279 (Lys279) is an N6-(pyridoxal phosphate)lysine. Phosphoserine is present on residues Ser483, Ser488, and Ser491.

This sequence belongs to the class-I pyridoxal-phosphate-dependent aminotransferase family. In terms of assembly, homodimer and heterodimer. In vivo, the relevance of heterodimerization with other ACS enzymes is however unsure. Interacts with GRF3. It depends on pyridoxal 5'-phosphate as a cofactor. Phosphorylated on serine residue by MAP kinase (MPK6). In terms of processing, may be processed at its C-terminus. In terms of tissue distribution, high in developing leaves and in flowers. Expressed in roots and siliques.

It carries out the reaction S-adenosyl-L-methionine = 1-aminocyclopropane-1-carboxylate + S-methyl-5'-thioadenosine + H(+). The protein operates within alkene biosynthesis; ethylene biosynthesis via S-adenosyl-L-methionine; ethylene from S-adenosyl-L-methionine: step 1/2. In terms of biological role, 1-aminocyclopropane-1-carboxylate synthase (ACS) enzymes catalyze the conversion of S-adenosyl-L-methionine (SAM) into 1-aminocyclopropane-1-carboxylate (ACC), a direct precursor of ethylene. In Arabidopsis thaliana (Mouse-ear cress), this protein is 1-aminocyclopropane-1-carboxylate synthase 2 (ACS2).